The sequence spans 505 residues: Activin receptor type-1B (505 aa).

Positions 1 to 23 are cleaved as a signal peptide; sequence MAESAGASSFFPLVVLLLAGSGG. The Extracellular segment spans residues 24–126; sequence SGPRGVQALL…EHPSMWGPVE (103 aa). Asparagine 43 is a glycosylation site (N-linked (GlcNAc...) asparagine). The helical transmembrane segment at 127 to 149 threads the bilayer; that stretch reads LVGIIAGPVFLLFLIIIIVFLVI. Topologically, residues 150–505 are cytoplasmic; that stretch reads NYHQRVYHNR…QLSVQEDVKI (356 aa). Positions 177 to 206 constitute a GS domain; sequence KTLQDLVYDLSTSGSGSGLPLFVQRTVART. Residues 207-497 form the Protein kinase domain; the sequence is IVLQEIIGKG…LRIKKTLSQL (291 aa). Residues 213-221 and lysine 234 contribute to the ATP site; that span reads IGKGRFGEV. The active-site Proton acceptor is the aspartate 335. Tyrosine 380 carries the phosphotyrosine modification.

The protein belongs to the protein kinase superfamily. TKL Ser/Thr protein kinase family. TGFB receptor subfamily. As to quaternary structure, forms an activin receptor complex with activin receptor type-2 (ACVR2A or ACVR2B). Part of a complex consisting of MAGI2/ARIP1, ACVR2A, ACVR1B and SMAD3. Interacts with SMAD2 and SMAD3. Interacts with SMAD7. Interacts with FKBP1A. Interacts with IGSF1. Interacts with CRIPTO. Interacts with TDP2. Interacts with TSC22D1/TSC-22. The cofactor is Mg(2+). Mn(2+) is required as a cofactor. In terms of processing, autophosphorylated. Phosphorylated by activin receptor type-2 (ACVR2A or ACVR2B) in response to activin-binding at serine and threonine residues in the GS domain. Phosphorylation of ACVR1B by activin receptor type-2 regulates association with SMAD7. Post-translationally, ubiquitinated. Level of ubiquitination is regulated by the SMAD7-SMURF1 complex. Ubiquitinated. Expressed in many tissues, most strongly in kidney, pancreas, brain, lung, and liver.

It is found in the cell membrane. The catalysed reaction is L-threonyl-[receptor-protein] + ATP = O-phospho-L-threonyl-[receptor-protein] + ADP + H(+). It carries out the reaction L-seryl-[receptor-protein] + ATP = O-phospho-L-seryl-[receptor-protein] + ADP + H(+). With respect to regulation, activin receptor type-2 (ACVR2A or ACVR2B) activates the type-1 receptor through phosphorylation of its regulatory GS domain. In terms of biological role, transmembrane serine/threonine kinase activin type-1 receptor forming an activin receptor complex with activin receptor type-2 (ACVR2A or ACVR2B). Transduces the activin signal from the cell surface to the cytoplasm and is thus regulating a many physiological and pathological processes including neuronal differentiation and neuronal survival, hair follicle development and cycling, FSH production by the pituitary gland, wound healing, extracellular matrix production, immunosuppression and carcinogenesis. Activin is also thought to have a paracrine or autocrine role in follicular development in the ovary. Within the receptor complex, type-2 receptors (ACVR2A and/or ACVR2B) act as a primary activin receptors whereas the type-1 receptors like ACVR1B act as downstream transducers of activin signals. Activin binds to type-2 receptor at the plasma membrane and activates its serine-threonine kinase. The activated receptor type-2 then phosphorylates and activates the type-1 receptor such as ACVR1B. Once activated, the type-1 receptor binds and phosphorylates the SMAD proteins SMAD2 and SMAD3, on serine residues of the C-terminal tail. Soon after their association with the activin receptor and subsequent phosphorylation, SMAD2 and SMAD3 are released into the cytoplasm where they interact with the common partner SMAD4. This SMAD complex translocates into the nucleus where it mediates activin-induced transcription. Inhibitory SMAD7, which is recruited to ACVR1B through FKBP1A, can prevent the association of SMAD2 and SMAD3 with the activin receptor complex, thereby blocking the activin signal. Activin signal transduction is also antagonized by the binding to the receptor of inhibin-B via the IGSF1 inhibin coreceptor. ACVR1B also phosphorylates TDP2. The sequence is that of Activin receptor type-1B (ACVR1B) from Homo sapiens (Human).